The primary structure comprises 337 residues: tRNA N6-adenosine threonylcarbamoyltransferase (337 aa).

Fe cation is bound by residues histidine 111 and histidine 115. Substrate contacts are provided by residues 134–138, aspartate 167, glycine 180, and asparagine 272; that span reads LVSGG. Aspartate 300 contributes to the Fe cation binding site.

It belongs to the KAE1 / TsaD family. The cofactor is Fe(2+).

The protein resides in the cytoplasm. It catalyses the reaction L-threonylcarbamoyladenylate + adenosine(37) in tRNA = N(6)-L-threonylcarbamoyladenosine(37) in tRNA + AMP + H(+). Required for the formation of a threonylcarbamoyl group on adenosine at position 37 (t(6)A37) in tRNAs that read codons beginning with adenine. Is involved in the transfer of the threonylcarbamoyl moiety of threonylcarbamoyl-AMP (TC-AMP) to the N6 group of A37, together with TsaE and TsaB. TsaD likely plays a direct catalytic role in this reaction. In Shewanella amazonensis (strain ATCC BAA-1098 / SB2B), this protein is tRNA N6-adenosine threonylcarbamoyltransferase.